The chain runs to 288 residues: Pyridoxal kinase PdxY (288 aa).

Substrate contacts are provided by residues Ser12 and 47 to 48 (TQ). Residues Asp114, Glu151, Lys184, and 211-214 (RPLL) contribute to the ATP site. Asp225 lines the substrate pocket.

The protein belongs to the pyridoxine kinase family. PdxY subfamily. In terms of assembly, homodimer. Mg(2+) is required as a cofactor.

The catalysed reaction is pyridoxal + ATP = pyridoxal 5'-phosphate + ADP + H(+). Its pathway is cofactor metabolism; pyridoxal 5'-phosphate salvage; pyridoxal 5'-phosphate from pyridoxal: step 1/1. Its function is as follows. Pyridoxal kinase involved in the salvage pathway of pyridoxal 5'-phosphate (PLP). Catalyzes the phosphorylation of pyridoxal to PLP. In Pseudomonas syringae pv. tomato (strain ATCC BAA-871 / DC3000), this protein is Pyridoxal kinase PdxY.